The sequence spans 450 residues: Perilipin-2 (450 aa).

N-acetylalanine is present on alanine 2. Position 215 is a phosphoserine (serine 215). Tyrosine 232 carries the phosphotyrosine modification. The disordered stretch occupies residues glutamate 411 to serine 450. Residues arginine 423–lysine 433 are compositionally biased toward basic residues. A compositionally biased stretch (polar residues) spans alanine 440–serine 450.

It belongs to the perilipin family. Interacts with IRGC. In terms of processing, acylated; primarily with C14, C16 and C18 fatty acids. Phosphorylation at Tyr-232 by isoform 1 of CHKA (CHKalpha2) promotes dissociation from lipid droplets: dissociation is followed by recruitment of autophagosome machinery to lipid droplets and subsequent lipid droplet lipolysis. Post-translationally, polyubiquitination of Nt-acetylatable A-PLIN2 by MARCHF6 lead to degradation by 26S proteasomes. As to expression, milk lipid globules.

Its subcellular location is the membrane. It is found in the lipid droplet. Functionally, structural component of lipid droplets, which is required for the formation and maintenance of lipid storage droplets. In Bos taurus (Bovine), this protein is Perilipin-2 (PLIN2).